Consider the following 304-residue polypeptide: Aspartate carbamoyltransferase catalytic subunit (304 aa).

Carbamoyl phosphate is bound by residues R55 and T56. K84 serves as a coordination point for L-aspartate. R105, H133, and Q136 together coordinate carbamoyl phosphate. Residues R165 and R226 each coordinate L-aspartate. L265 and P266 together coordinate carbamoyl phosphate.

This sequence belongs to the aspartate/ornithine carbamoyltransferase superfamily. ATCase family. In terms of assembly, heterooligomer of catalytic and regulatory chains.

The catalysed reaction is carbamoyl phosphate + L-aspartate = N-carbamoyl-L-aspartate + phosphate + H(+). It participates in pyrimidine metabolism; UMP biosynthesis via de novo pathway; (S)-dihydroorotate from bicarbonate: step 2/3. Functionally, catalyzes the condensation of carbamoyl phosphate and aspartate to form carbamoyl aspartate and inorganic phosphate, the committed step in the de novo pyrimidine nucleotide biosynthesis pathway. The protein is Aspartate carbamoyltransferase catalytic subunit of Methanothrix thermoacetophila (strain DSM 6194 / JCM 14653 / NBRC 101360 / PT) (Methanosaeta thermophila).